The following is a 150-amino-acid chain: Protein E6 (150 aa).

2 zinc fingers span residues 31–67 (CVFCKNALTTAEIYSYAYKHLKVLFRGGYPYAACACC) and 104–140 (CYLCHKPLCEVEKVKHILTKARFIKLNCTWKGRCLHC).

Belongs to the papillomaviridae E6 protein family. In terms of assembly, forms homodimers. Interacts with ubiquitin-protein ligase UBE3A/E6-AP; this interaction stimulates UBE3A ubiquitin activity. Interacts with host TP53 and EP300; this interaction inhibits TP53 activity. Interacts with human zyxin.

Its subcellular location is the host cytoplasm. The protein resides in the host nucleus. In terms of biological role, plays a major role in the induction and maintenance of cellular transformation. E6 associates with host UBE3A/E6-AP ubiquitin-protein ligase and modulates its activity. Sequesters tumor suppressor TP53 in the host cytoplasm and modulates its activity by interacting with host EP300 that results in the reduction of TP53 acetylation and activation. In turn, apoptosis induced by DNA damage is inhibited. E6 also protects host keratinocytes from apoptosis by mediating the degradation of host BAK1. May also inhibit host immune response. This is Protein E6 from Human papillomavirus type 6b.